The primary structure comprises 1286 residues: CLIP-associating protein 2 (1286 aa).

Positions methionine 1 to threonine 40 are golgi localization. Phosphoserine occurs at positions 14 and 20. Positions aspartate 17–glycine 67 are disordered. A compositionally biased stretch (gly residues) spans serine 53–glycine 67. Residues glycine 66–serine 317 form a TOG 1 region. 3 HEAT repeats span residues histidine 179–threonine 214, histidine 215–threonine 251, and arginine 256–glycine 293. The tract at residues valine 320 to serine 374 is disordered. Phosphoserine occurs at positions 322, 333, and 336. Positions serine 322 to proline 340 are enriched in low complexity. A compositionally biased stretch (polar residues) spans phenylalanine 341–threonine 352. Phosphoserine is present on residues serine 374, serine 376, and serine 413. Positions tyrosine 411–valine 473 are disordered. Positions threonine 417–valine 431 are enriched in basic and acidic residues. The interaction with microtubules, MAPRE1 and MAPRE3 stretch occupies residues arginine 450–serine 565. The span at serine 459–valine 473 shows a compositional bias: low complexity. Phosphoserine occurs at positions 461, 465, 469, 484, and 495. Positions serine 493–serine 564 are disordered. The SXIP motif 1; mediates interaction with MAPRE1 and targeting to microtubule plus ends motif lies at serine 500–proline 503. Phosphoserine is present on serine 513. The SXIP motif 2; mediates interaction with MAPRE1 and targeting to microtubule plus ends signature appears at serine 523–proline 526. Residues serine 531, serine 535, serine 570, serine 572, serine 581, serine 614, and serine 620 each carry the phosphoserine modification. Residues arginine 605 to aspartate 616 are compositionally biased toward basic and acidic residues. Residues arginine 605–isoleucine 638 are disordered. Residues serine 620–arginine 634 show a composition bias toward low complexity. Residues methionine 642 to asparagine 873 form a TOG 2 region. 2 HEAT repeats span residues lysine 702–alanine 739 and leucine 764–proline 801. Threonine 779 is modified (phosphothreonine). Positions threonine 864–serine 1286 are interaction with RSN and localization to the Golgi and kinetochores. 2 disordered regions span residues histidine 870–aspartate 920 and serine 944–alanine 989. 2 stretches are compositionally biased toward polar residues: residues arginine 872–serine 884 and serine 893–proline 914. The residue at position 884 (serine 884) is a Phosphoserine. Serine 944, serine 947, serine 1005, and serine 1021 each carry phosphoserine. The segment covering serine 947 to glycine 964 has biased composition (basic and acidic residues). The segment at arginine 1009–serine 1286 is required for cortical localization. 3 HEAT repeats span residues leucine 1046 to glutamate 1083, glutamate 1090 to alanine 1127, and methionine 1208 to aspartate 1245.

This sequence belongs to the CLASP family. As to quaternary structure, interacts with microtubules. Interacts with MAPRE1; probably required for targeting to growing microtubule plus ends. Interacts with ERC1, MAPRE3 and PHLDB2. The interaction with ERC1 may be mediated by PHLDB2. Interacts with GCC2; recruits CLASP2 to Golgi membranes. Interacts with CLIP2 and RSN. Interacts with MACF1. Interacts with mtcl2. Interacts with MTCL1. Phosphorylated by GSK3B. Phosphorylation by GSK3B may negatively regulate binding to microtubule lattices in lamella. Isoform 2 is phosphorylated on Ser-241. Highly expressed in brain and at low levels in heart, kidney and lung.

The protein localises to the cytoplasm. Its subcellular location is the cytoskeleton. The protein resides in the microtubule organizing center. It is found in the centrosome. It localises to the chromosome. The protein localises to the centromere. Its subcellular location is the kinetochore. The protein resides in the spindle. It is found in the spindle pole. It localises to the golgi apparatus. The protein localises to the trans-Golgi network. Its subcellular location is the cell membrane. The protein resides in the cell projection. It is found in the ruffle membrane. It localises to the cell cortex. Microtubule plus-end tracking protein that promotes the stabilization of dynamic microtubules. Involved in the nucleation of noncentrosomal microtubules originating from the trans-Golgi network (TGN). Required for the polarization of the cytoplasmic microtubule arrays in migrating cells towards the leading edge of the cell. May act at the cell cortex to enhance the frequency of rescue of depolymerizing microtubules by attaching their plus-ends to cortical platforms composed of ERC1 and PHLDB2. This cortical microtubule stabilizing activity is regulated at least in part by phosphatidylinositol 3-kinase signaling. Also performs a similar stabilizing function at the kinetochore which is essential for the bipolar alignment of chromosomes on the mitotic spindle. Acts as a mediator of ERBB2-dependent stabilization of microtubules at the cell cortex. This Mus musculus (Mouse) protein is CLIP-associating protein 2 (Clasp2).